The following is a 191-amino-acid chain: PBAN-type neuropeptides (191 aa).

The signal sequence occupies residues Met-1–Ala-17. At Leu-44 the chain carries Leucine amide. A propeptide spanning residues Ser-48–Thr-91 is cleaved from the precursor. Residues Leu-100, Leu-120, Leu-156, and Leu-166 each carry the leucine amide modification. A propeptide spanning residues Glu-169–Thr-191 is cleaved from the precursor.

The protein belongs to the pyrokinin family. As to expression, expressed in the subesophageal ganglion.

Its subcellular location is the secreted. In terms of biological role, a hormone that controls sex pheromone production in females and pheromone responsiveness in male. The chain is PBAN-type neuropeptides from Spodoptera littoralis (Egyptian cotton leafworm).